The following is a 279-amino-acid chain: Fatty acid elongase 2 (279 aa).

Helical transmembrane passes span 16–36 (LMLE…ALVW), 61–81 (AIIV…IVVV), 112–132 (FWIG…MFLL), 138–158 (PPFL…HTYC), 164–184 (MVLF…YFAM), 196–216 (FAPF…LVTT), and 242–262 (MGVI…LNSY). The HxxHH motif motif lies at 142–146 (HWYHH). Residue histidine 145 is the Nucleophile of the active site.

This sequence belongs to the ELO family.

The protein localises to the endoplasmic reticulum membrane. The enzyme catalyses an acyl-CoA + malonyl-CoA + H(+) = a 3-oxoacyl-CoA + CO2 + CoA. The protein operates within lipid metabolism; fatty acid biosynthesis. Functionally, involved in the synthesis of fatty acids. Elongates C10 fatty acids to C14. Required for the maintenance of the global lipidome profile in this parasite. This Trypanosoma cruzi (strain CL Brener) protein is Fatty acid elongase 2.